Consider the following 158-residue polypeptide: NADPH-dependent 7-cyano-7-deazaguanine reductase (158 aa).

C56 (thioimide intermediate) is an active-site residue. D63 functions as the Proton donor in the catalytic mechanism. Substrate-binding positions include 78–80 and 97–98; these read VES and HE.

It belongs to the GTP cyclohydrolase I family. QueF type 1 subfamily.

The protein resides in the cytoplasm. The catalysed reaction is 7-aminomethyl-7-carbaguanine + 2 NADP(+) = 7-cyano-7-deazaguanine + 2 NADPH + 3 H(+). Its pathway is tRNA modification; tRNA-queuosine biosynthesis. Functionally, catalyzes the NADPH-dependent reduction of 7-cyano-7-deazaguanine (preQ0) to 7-aminomethyl-7-deazaguanine (preQ1). This is NADPH-dependent 7-cyano-7-deazaguanine reductase from Rhodopseudomonas palustris (strain BisB5).